Reading from the N-terminus, the 326-residue chain is Vacuolar protein sorting-associated protein 26A (326 aa).

Belongs to the VPS26 family. As to quaternary structure, component of the heterotrimeric retromer cargo-selective complex (CSC) which is believed to associate with variable sorting nexins to form functionally distinct retromer complex variants.

Its subcellular location is the cytoplasm. The protein resides in the endosome membrane. It is found in the early endosome. Acts as a component of the retromer cargo-selective complex (CSC). The CSC is believed to be the core functional component of retromer or respective retromer complex variants acting to prevent missorting of selected transmembrane cargo proteins into the lysosomal degradation pathway. Retromer mediates retrograde transport of cargo proteins from endosomes to the trans-Golgi network (TGN). This Xenopus tropicalis (Western clawed frog) protein is Vacuolar protein sorting-associated protein 26A (vps26a).